We begin with the raw amino-acid sequence, 20 residues long: Phylloseptin-O1 (20 aa).

G20 bears the Glycine amide mark.

In terms of tissue distribution, expressed by the skin glands.

Its subcellular location is the secreted. Has antiprotozoal activity against T.cruzi. This Pithecopus oreades (Orange-legged leaf frog) protein is Phylloseptin-O1 (psn4).